A 410-amino-acid chain; its full sequence is G-protein coupled receptor family C group 5 member B (410 aa).

The N-terminal stretch at 1-28 (MFLVLERKMRTHQVFPLPLLLVIASVAS) is a signal peptide. The Extracellular segment spans residues 29 to 56 (ENASTSRGCGLDLLPQYVSLCDLDAIWG). Asparagine 30 is a glycosylation site (N-linked (GlcNAc...) asparagine). The helical transmembrane segment at 57–77 (IVVEAVAGAGALITLLLMLIL) threads the bilayer. Over 78–94 (LVRLPFIKDKERKRPVC) the chain is Cytoplasmic. The chain crosses the membrane as a helical span at residues 95–115 (LHFLFLLGTLGLFGLTFAFII). The Extracellular segment spans residues 116-126 (QMDETICSIRR). Residues 127–147 (FLWGVLFALCFSCLLSQAWRV) form a helical membrane-spanning segment. Residues 148 to 164 (RRLVRQGTSPASWQLVS) lie on the Cytoplasmic side of the membrane. A helical transmembrane segment spans residues 165–185 (LALCLMLVQVIIATEWLVLTV). Residues 186-199 (LRDTKPACAYEPMD) are Extracellular-facing. Residues 200 to 220 (FVMALIYDMVLLAITLAQSLF) form a helical membrane-spanning segment. Over 221-234 (TLCGKFKRWKVNGA) the chain is Cytoplasmic. The chain crosses the membrane as a helical span at residues 235 to 255 (FILVTTFLSALIWVVWMTMYL). The Extracellular segment spans residues 256–271 (FGNSLIKQGDAWSDPT). Residues 272–292 (LAITLAASGWVFVIFHAIPEI) traverse the membrane as a helical segment. The Cytoplasmic portion of the chain corresponds to 293–410 (HYTLLPPLQE…PPSHTGRHHW (118 aa)). Phosphoserine is present on serine 355. Residues 356–381 (LEQRSSSLGKKPSSLGNRPSAPFRSN) are disordered. Low complexity predominate over residues 360–371 (SSSLGKKPSSLG).

This sequence belongs to the G-protein coupled receptor 3 family.

It localises to the cell membrane. It is found in the cytoplasmic vesicle membrane. Functionally, G-protein coupled receptor involved in the regulation of cell volume. The sequence is that of G-protein coupled receptor family C group 5 member B (Gprc5b) from Mus musculus (Mouse).